The chain runs to 290 residues: Probable ECF RNA polymerase sigma factor SigI (290 aa).

Residues 11–74 (WRAHRAYLVD…LCLDHIKSAS (64 aa)) form a sigma-70 factor domain-2 region. Residues 34–37 (DMVQ) carry the Polymerase core binding motif. The interval 110–162 (LALLIMLERLGPAERVVFVLHEIFGLPYQQIATTIGSQASTCRQLAHRARRKI) is sigma-70 factor domain-4_2. The segment at residues 137–156 (YQQIATTIGSQASTCRQLAH) is a DNA-binding region (H-T-H motif).

It belongs to the sigma-70 factor family. ECF subfamily. In terms of assembly, interacts transiently with the RNA polymerase catalytic core formed by RpoA, RpoB, RpoC and RpoZ (2 alpha, 1 beta, 1 beta' and 1 omega subunit) to form the RNA polymerase holoenzyme that can initiate transcription.

In terms of biological role, sigma factors are initiation factors that promote the attachment of RNA polymerase to specific initiation sites and are then released. Extracytoplasmic function (ECF) sigma factors are held in an inactive form by a cognate anti-sigma factor until released, although no anti-sigma factor is known for this protein. The chain is Probable ECF RNA polymerase sigma factor SigI (sigI) from Mycobacterium tuberculosis (strain CDC 1551 / Oshkosh).